We begin with the raw amino-acid sequence, 833 residues long: Leucine--tRNA ligase (833 aa).

The 'HIGH' region motif lies at 41–52 (PYPSGAGLHVGH). A 'KMSKS' region motif is present at residues 610-614 (KMSKS). Residue Lys613 participates in ATP binding.

Belongs to the class-I aminoacyl-tRNA synthetase family.

It is found in the cytoplasm. The enzyme catalyses tRNA(Leu) + L-leucine + ATP = L-leucyl-tRNA(Leu) + AMP + diphosphate. The chain is Leucine--tRNA ligase from Streptococcus pyogenes serotype M4 (strain MGAS10750).